We begin with the raw amino-acid sequence, 305 residues long: Methionyl-tRNA formyltransferase (305 aa).

108 to 111 (SLLP) serves as a coordination point for (6S)-5,6,7,8-tetrahydrofolate.

This sequence belongs to the Fmt family.

It carries out the reaction L-methionyl-tRNA(fMet) + (6R)-10-formyltetrahydrofolate = N-formyl-L-methionyl-tRNA(fMet) + (6S)-5,6,7,8-tetrahydrofolate + H(+). In terms of biological role, attaches a formyl group to the free amino group of methionyl-tRNA(fMet). The formyl group appears to play a dual role in the initiator identity of N-formylmethionyl-tRNA by promoting its recognition by IF2 and preventing the misappropriation of this tRNA by the elongation apparatus. This Thermus thermophilus (strain ATCC 27634 / DSM 579 / HB8) protein is Methionyl-tRNA formyltransferase.